The chain runs to 433 residues: ATP-dependent protease ATPase subunit HslU (433 aa).

Residues valine 18, 60–65, aspartate 246, glutamate 311, and arginine 383 each bind ATP; that span reads GVGKTE.

Belongs to the ClpX chaperone family. HslU subfamily. As to quaternary structure, a double ring-shaped homohexamer of HslV is capped on each side by a ring-shaped HslU homohexamer. The assembly of the HslU/HslV complex is dependent on binding of ATP.

Its subcellular location is the cytoplasm. ATPase subunit of a proteasome-like degradation complex; this subunit has chaperone activity. The binding of ATP and its subsequent hydrolysis by HslU are essential for unfolding of protein substrates subsequently hydrolyzed by HslV. HslU recognizes the N-terminal part of its protein substrates and unfolds these before they are guided to HslV for hydrolysis. This chain is ATP-dependent protease ATPase subunit HslU, found in Rhodopseudomonas palustris (strain ATCC BAA-98 / CGA009).